The primary structure comprises 363 residues: GDSL esterase/lipase At1g29670 (363 aa).

The N-terminal stretch at 1 to 24 (MESYLTKWCVVLVLLCFGFSVVKA) is a signal peptide. S39 functions as the Nucleophile in the catalytic mechanism. Active-site residues include D327 and H330.

It belongs to the 'GDSL' lipolytic enzyme family.

The protein localises to the secreted. This Arabidopsis thaliana (Mouse-ear cress) protein is GDSL esterase/lipase At1g29670.